A 574-amino-acid chain; its full sequence is Proline--tRNA ligase (574 aa).

Belongs to the class-II aminoacyl-tRNA synthetase family. ProS type 1 subfamily. As to quaternary structure, homodimer.

The protein localises to the cytoplasm. It carries out the reaction tRNA(Pro) + L-proline + ATP = L-prolyl-tRNA(Pro) + AMP + diphosphate. Catalyzes the attachment of proline to tRNA(Pro) in a two-step reaction: proline is first activated by ATP to form Pro-AMP and then transferred to the acceptor end of tRNA(Pro). As ProRS can inadvertently accommodate and process non-cognate amino acids such as alanine and cysteine, to avoid such errors it has two additional distinct editing activities against alanine. One activity is designated as 'pretransfer' editing and involves the tRNA(Pro)-independent hydrolysis of activated Ala-AMP. The other activity is designated 'posttransfer' editing and involves deacylation of mischarged Ala-tRNA(Pro). The misacylated Cys-tRNA(Pro) is not edited by ProRS. This Sodalis glossinidius (strain morsitans) protein is Proline--tRNA ligase.